A 173-amino-acid chain; its full sequence is 6,7-dimethyl-8-ribityllumazine synthase (173 aa).

5-amino-6-(D-ribitylamino)uracil contacts are provided by residues Phe24, 58 to 60 (ALE), and 82 to 84 (AVI). 87 to 88 (ET) contacts (2S)-2-hydroxy-3-oxobutyl phosphate. His90 acts as the Proton donor in catalysis. Residue Asn115 participates in 5-amino-6-(D-ribitylamino)uracil binding. Arg129 is a binding site for (2S)-2-hydroxy-3-oxobutyl phosphate. Positions 150–173 (ALEPEEDDEDDEDEDFDDEEDDGR) are disordered. Positions 152–173 (EPEEDDEDDEDEDFDDEEDDGR) are enriched in acidic residues.

Belongs to the DMRL synthase family.

It carries out the reaction (2S)-2-hydroxy-3-oxobutyl phosphate + 5-amino-6-(D-ribitylamino)uracil = 6,7-dimethyl-8-(1-D-ribityl)lumazine + phosphate + 2 H2O + H(+). It participates in cofactor biosynthesis; riboflavin biosynthesis; riboflavin from 2-hydroxy-3-oxobutyl phosphate and 5-amino-6-(D-ribitylamino)uracil: step 1/2. Catalyzes the formation of 6,7-dimethyl-8-ribityllumazine by condensation of 5-amino-6-(D-ribitylamino)uracil with 3,4-dihydroxy-2-butanone 4-phosphate. This is the penultimate step in the biosynthesis of riboflavin. The sequence is that of 6,7-dimethyl-8-ribityllumazine synthase from Bordetella pertussis (strain Tohama I / ATCC BAA-589 / NCTC 13251).